Reading from the N-terminus, the 467-residue chain is Probable Xaa-Pro aminopeptidase SMAC_04549 (467 aa).

The Mn(2+) site is built by Asp-263, Asp-274, Glu-397, and Glu-437.

Belongs to the peptidase M24B family. Mn(2+) is required as a cofactor.

It carries out the reaction Release of any N-terminal amino acid, including proline, that is linked to proline, even from a dipeptide or tripeptide.. In terms of biological role, catalyzes the removal of a penultimate prolyl residue from the N-termini of peptides. In Sordaria macrospora (strain ATCC MYA-333 / DSM 997 / K(L3346) / K-hell), this protein is Probable Xaa-Pro aminopeptidase SMAC_04549.